Reading from the N-terminus, the 378-residue chain is Chaperone protein DnaJ (378 aa).

A J domain is found at 5–70 (DFYEVLGLSK…QKRAAYDQYG (66 aa)). The segment at 133-211 (GITKEIRIPT…CHGDGRVERY (79 aa)) adopts a CR-type zinc-finger fold. Residues C146, C149, C163, C166, C185, C188, C199, and C202 each coordinate Zn(2+). CXXCXGXG motif repeat units lie at residues 146-153 (CDKCHGSG), 163-170 (CSTCHGAG), 185-192 (CPTCHGRG), and 199-206 (CSKCHGDG).

Belongs to the DnaJ family. Homodimer. Requires Zn(2+) as cofactor.

Its subcellular location is the cytoplasm. Participates actively in the response to hyperosmotic and heat shock by preventing the aggregation of stress-denatured proteins and by disaggregating proteins, also in an autonomous, DnaK-independent fashion. Unfolded proteins bind initially to DnaJ; upon interaction with the DnaJ-bound protein, DnaK hydrolyzes its bound ATP, resulting in the formation of a stable complex. GrpE releases ADP from DnaK; ATP binding to DnaK triggers the release of the substrate protein, thus completing the reaction cycle. Several rounds of ATP-dependent interactions between DnaJ, DnaK and GrpE are required for fully efficient folding. Also involved, together with DnaK and GrpE, in the DNA replication of plasmids through activation of initiation proteins. The polypeptide is Chaperone protein DnaJ (Proteus mirabilis (strain HI4320)).